Here is a 354-residue protein sequence, read N- to C-terminus: Guanine nucleotide-binding protein G(t) subunit alpha-2 (354 aa).

Residues 1-27 (MGSGASAEDKELAKRSKELEKKLQEDA) are disordered. Gly-2 carries N-myristoyl glycine lipidation. Over residues 7-27 (AEDKELAKRSKELEKKLQEDA) the composition is skewed to basic and acidic residues. Residues 32-354 (KTVKLLLLGA…KENLKDCGLF (323 aa)) form the G-alpha domain. Positions 35 to 48 (KLLLLGAGESGKST) are G1 motif. Residues 40–47 (GAGESGKS), 175–181 (LRSRVKT), 200–204 (DVGGQ), 269–272 (NKKD), and Ala-326 contribute to the GTP site. Ser-47 serves as a coordination point for Mg(2+). Positions 173-181 (DVLRSRVKT) are G2 motif. Arg-178 carries the ADP-ribosylarginine; by cholera toxin modification. Position 181 (Thr-181) interacts with Mg(2+). Residues 196 to 205 (FRMFDVGGQR) form a G3 motif region. Positions 265–272 (VLFLNKKD) are G4 motif. The segment at 324 to 329 (TCATDT) is G5 motif. The residue at position 351 (Cys-351) is an ADP-ribosylcysteine; by pertussis toxin.

This sequence belongs to the G-alpha family. G(i/o/t/z) subfamily. G proteins are composed of 3 units; alpha, beta and gamma. The alpha chain contains the guanine nucleotide binding site. In terms of tissue distribution, retinal rod outer segment.

The protein resides in the cell projection. It is found in the cilium. It localises to the photoreceptor outer segment. The protein localises to the photoreceptor inner segment. Guanine nucleotide-binding proteins (G proteins) are involved as modulators or transducers in various transmembrane signaling systems. Transducin is an amplifier and one of the transducers of a visual impulse that performs the coupling between rhodopsin and cGMP-phosphodiesterase. The chain is Guanine nucleotide-binding protein G(t) subunit alpha-2 (GNAT2) from Homo sapiens (Human).